Here is a 354-residue protein sequence, read N- to C-terminus: NADH-quinone oxidoreductase subunit H (354 aa).

10 helical membrane-spanning segments follow: residues 12 to 32 (LLGGFWPVVWNLIKIVALIAP), 62 to 82 (PWGLLTPIADAVKLIFKEIIL), 89 to 109 (GLFLLGPVMTIMPALAAWVVV), 124 to 144 (LLFLMAITSMEVYGVIIAGWA), 162 to 182 (VSYEIAMGFALVVVLMVSGTL), 203 to 223 (FLSWNWLPLFPIFIVYFISGL), 239 to 259 (EIVAGHMIEYSGMAFAMFFLA), 263 to 283 (NMILISALAVTMFLGGWLPPI), 291 to 311 (IPGWIWLGLKTFVVVTMFLWV), and 326 to 346 (LGWKIFIPITLIWLVVVGLWI).

It belongs to the complex I subunit 1 family. As to quaternary structure, NDH-1 is composed of 14 different subunits. Subunits NuoA, H, J, K, L, M, N constitute the membrane sector of the complex.

It is found in the cell inner membrane. It catalyses the reaction a quinone + NADH + 5 H(+)(in) = a quinol + NAD(+) + 4 H(+)(out). Functionally, NDH-1 shuttles electrons from NADH, via FMN and iron-sulfur (Fe-S) centers, to quinones in the respiratory chain. The immediate electron acceptor for the enzyme in this species is believed to be ubiquinone. Couples the redox reaction to proton translocation (for every two electrons transferred, four hydrogen ions are translocated across the cytoplasmic membrane), and thus conserves the redox energy in a proton gradient. This subunit may bind ubiquinone. This chain is NADH-quinone oxidoreductase subunit H, found in Methylibium petroleiphilum (strain ATCC BAA-1232 / LMG 22953 / PM1).